Consider the following 219-residue polypeptide: LHFPL tetraspan subfamily member 5 protein (219 aa).

The Cytoplasmic segment spans residues 1–24 (MVKLLPAQEAAKIYHTNYVRNSRA). Residues 25–45 (VGVMWGTLTICFSVLVMALFI) traverse the membrane as a helical segment. The Extracellular segment spans residues 46 to 98 (QPYWIGDSVSTPQAGYFGLFSYCVGNVLSSELICKGGPLDFSSIPSRAFKTAM). A helical transmembrane segment spans residues 99-119 (FFVALAMFLIIGSIICFSLFF). At 120–128 (VCNTATVYK) the chain is on the cytoplasmic side. The chain crosses the membrane as a helical span at residues 129–149 (ICAWMQLAAATGLMIGCLVYP). The Extracellular portion of the chain corresponds to 150-178 (DGWDSSEVRRMCGEQTGKYTLGHCTIRWA). Residues 179–199 (FMLAILSIGDALILSFLAFVL) traverse the membrane as a helical segment. At 200-219 (GYRQDKLLPDDYKADGNEEV) the chain is on the cytoplasmic side.

This sequence belongs to the LHFP family. As to quaternary structure, forms the MET channel composed of TMC (TMC1 or TMC2), TMIE, TOMT, CIB (CIB2 or CIB3), LHPL5 and PCDH15. Interaction with PCDH15 is required for efficient localization to hair bundles.

The protein localises to the cell membrane. Functionally, auxiliary subunit of the mechanotransducer (MET) non-specific cation channel complex located at the tips of the shorter stereocilia of cochlear hair cells and that mediates sensory transduction in the auditory system. The MET complex is composed of two dimeric pore-forming ion-conducting transmembrane TMC (TMC1 or TMC2) subunits, and aided by several auxiliary proteins including LHFPL5, TMIE, CIB2/3 and TOMT, and the tip-link PCDH15. Functionally couples PCDH15 to the transduction channel. The protein is LHFPL tetraspan subfamily member 5 protein of Rattus norvegicus (Rat).